We begin with the raw amino-acid sequence, 69 residues long: Large ribosomal subunit protein bL32c (69 aa).

Belongs to the bacterial ribosomal protein bL32 family.

It is found in the plastid. The protein resides in the chloroplast. The protein is Large ribosomal subunit protein bL32c of Pelargonium hortorum (Common geranium).